Here is an 81-residue protein sequence, read N- to C-terminus: Protein K6 (81 aa).

Belongs to the poxviridae K6 protein family.

The chain is Protein K6 from Homo sapiens (Human).